We begin with the raw amino-acid sequence, 421 residues long: Core protease I7 homolog (421 aa).

Active-site residues include histidine 242, aspartate 249, and cysteine 329.

It belongs to the peptidase C57 family.

It is found in the virion. Late protein responsible for processing most or all of the viral core and membrane proteins known to undergo morphogenesis-associated proteolysis. These proteolytic events are involved in the transformation of immature virions (IV) into mature virions (MV). The protein is Core protease I7 homolog of Fowlpox virus (strain NVSL) (FPV).